A 938-amino-acid polypeptide reads, in one-letter code: Isoleucine--tRNA ligase (938 aa).

The short motif at 58–68 (PYANGSIHIGH) is the 'HIGH' region element. Residue Lys183 is modified to N6-acetyllysine. Glu561 serves as a coordination point for L-isoleucyl-5'-AMP. A 'KMSKS' region motif is present at residues 602 to 606 (KMSKS). Residue Lys605 participates in ATP binding. Residues Cys901, Cys904, Cys921, and Cys924 each contribute to the Zn(2+) site.

Belongs to the class-I aminoacyl-tRNA synthetase family. IleS type 1 subfamily. As to quaternary structure, monomer. Zn(2+) serves as cofactor.

It localises to the cytoplasm. The enzyme catalyses tRNA(Ile) + L-isoleucine + ATP = L-isoleucyl-tRNA(Ile) + AMP + diphosphate. Functionally, catalyzes the attachment of isoleucine to tRNA(Ile). As IleRS can inadvertently accommodate and process structurally similar amino acids such as valine, to avoid such errors it has two additional distinct tRNA(Ile)-dependent editing activities. One activity is designated as 'pretransfer' editing and involves the hydrolysis of activated Val-AMP. The other activity is designated 'posttransfer' editing and involves deacylation of mischarged Val-tRNA(Ile). This is Isoleucine--tRNA ligase from Escherichia coli O6:K15:H31 (strain 536 / UPEC).